Here is a 436-residue protein sequence, read N- to C-terminus: Putative permease MJ0326 (436 aa).

The next 12 membrane-spanning stretches (helical) occupy residues 24–44 (LAGI…PQIL), 51–71 (FGAV…VMGL), 79–99 (LAPG…GMGI), 103–123 (VALG…LTKI), 139–159 (TAVG…GIIV), 171–191 (LMEP…ILVS), 194–214 (VIGA…ILGI), 235–255 (LDIM…FFFV), 322–342 (GFVS…YPVV), 345–365 (IPPY…MRSV), 381–401 (ITLL…LGFI), and 416–436 (VHWL…YLSG).

It belongs to the nucleobase:cation symporter-2 (NCS2) (TC 2.A.40) family. Azg-like subfamily.

It localises to the cell membrane. This chain is Putative permease MJ0326, found in Methanocaldococcus jannaschii (strain ATCC 43067 / DSM 2661 / JAL-1 / JCM 10045 / NBRC 100440) (Methanococcus jannaschii).